Consider the following 207-residue polypeptide: Large ribosomal subunit protein uL4 (207 aa).

The tract at residues 52-77 (RGWADVSGGGRKPWRQKGTGRARAGS) is disordered.

The protein belongs to the universal ribosomal protein uL4 family. In terms of assembly, part of the 50S ribosomal subunit.

One of the primary rRNA binding proteins, this protein initially binds near the 5'-end of the 23S rRNA. It is important during the early stages of 50S assembly. It makes multiple contacts with different domains of the 23S rRNA in the assembled 50S subunit and ribosome. Its function is as follows. Forms part of the polypeptide exit tunnel. The protein is Large ribosomal subunit protein uL4 of Moorella thermoacetica (strain ATCC 39073 / JCM 9320).